Here is a 664-residue protein sequence, read N- to C-terminus: UvrABC system protein B (664 aa).

Residues 25-412 (KGLVSGLTDQ…LQVVEQLVRP (388 aa)) enclose the Helicase ATP-binding domain. 38 to 45 (GVTGSGKT) contacts ATP. Residues 91–114 (YYDYYQPEAYVPQKDMYIEKDSDI) carry the Beta-hairpin motif. The 167-residue stretch at 428-594 (QIDDLLEEVK…GIRKAIKDIN (167 aa)) folds into the Helicase C-terminal domain. The 36-residue stretch at 620 to 655 (ARLIKELESQMKKAAKNLEFERAALIRDRVVELRAA) folds into the UVR domain.

Belongs to the UvrB family. Forms a heterotetramer with UvrA during the search for lesions. Interacts with UvrC in an incision complex.

The protein resides in the cytoplasm. The UvrABC repair system catalyzes the recognition and processing of DNA lesions. A damage recognition complex composed of 2 UvrA and 2 UvrB subunits scans DNA for abnormalities. Upon binding of the UvrA(2)B(2) complex to a putative damaged site, the DNA wraps around one UvrB monomer. DNA wrap is dependent on ATP binding by UvrB and probably causes local melting of the DNA helix, facilitating insertion of UvrB beta-hairpin between the DNA strands. Then UvrB probes one DNA strand for the presence of a lesion. If a lesion is found the UvrA subunits dissociate and the UvrB-DNA preincision complex is formed. This complex is subsequently bound by UvrC and the second UvrB is released. If no lesion is found, the DNA wraps around the other UvrB subunit that will check the other stand for damage. The chain is UvrABC system protein B from Dehalococcoides mccartyi (strain CBDB1).